The sequence spans 338 residues: MRLYELSFAQIEDFFYKLAEVKDIIKDSGLMEFLPELKKLDSTIQTGTTRVKHAFPIFQKGGVVMDITNVQQAQIAEEAGAVAVMVLDKLPYDVRKSGGVARMADPKIIGEVMNSITIPVMAKVRIGHYYEAKLLEALGVDMIDESEVLTPADEEHHINKWEFSVPFVNGARNLGEALRRTAEGASMIRTKGEAGTGNVSEAVKHMKIINSEIRSLISMSEEDRVKKAREYQVPYQLVELTAKIKRLPIVNFAAGGIATPADAALMMWLGADGLFVGSGIFKSQDPDERAKAVVLAAACWEYPEIVLEAQKMISEQKSMMGIDIKSLKPEELLQVRGL.

Asp-66 serves as a coordination point for D-ribose 5-phosphate. Lys-123 serves as the catalytic Schiff-base intermediate with D-ribose 5-phosphate. D-ribose 5-phosphate is bound at residue Gly-195. Residue Lys-207 participates in D-glyceraldehyde 3-phosphate binding. D-ribose 5-phosphate contacts are provided by residues Gly-256 and 277 to 278; that span reads GS.

The protein belongs to the PdxS/SNZ family. As to quaternary structure, in the presence of PdxT, forms a dodecamer of heterodimers.

The enzyme catalyses aldehydo-D-ribose 5-phosphate + D-glyceraldehyde 3-phosphate + L-glutamine = pyridoxal 5'-phosphate + L-glutamate + phosphate + 3 H2O + H(+). Its pathway is cofactor biosynthesis; pyridoxal 5'-phosphate biosynthesis. In terms of biological role, catalyzes the formation of pyridoxal 5'-phosphate from ribose 5-phosphate (RBP), glyceraldehyde 3-phosphate (G3P) and ammonia. The ammonia is provided by the PdxT subunit. Can also use ribulose 5-phosphate and dihydroxyacetone phosphate as substrates, resulting from enzyme-catalyzed isomerization of RBP and G3P, respectively. In Saccharolobus islandicus (strain L.S.2.15 / Lassen #1) (Sulfolobus islandicus), this protein is Pyridoxal 5'-phosphate synthase subunit PdxS.